The sequence spans 172 residues: Endoribonuclease YbeY (172 aa).

The Zn(2+) site is built by H134, H138, and H144.

This sequence belongs to the endoribonuclease YbeY family. Requires Zn(2+) as cofactor.

It localises to the cytoplasm. Functionally, single strand-specific metallo-endoribonuclease involved in late-stage 70S ribosome quality control and in maturation of the 3' terminus of the 16S rRNA. The protein is Endoribonuclease YbeY of Burkholderia cenocepacia (strain HI2424).